The following is a 1288-amino-acid chain: Probable serine/threonine-protein kinase drkD (1288 aa).

Polar residues predominate over residues 1 to 12 (MEGSFQFNKSKQ). Disordered stretches follow at residues 1 to 132 (MEGS…QYHP), 156 to 223 (FNVS…PEEI), and 269 to 386 (SFGH…DDEE). 2 stretches are compositionally biased toward low complexity: residues 13-79 (TNNN…NSTS) and 156-220 (FNVS…QQQP). Residues 221-248 (EEIEGELNRERQERDKMLHEEAEIEQYK) are a coiled coil. Residues 271–291 (GHITSANSDETTNNESGSPIN) show a composition bias toward polar residues. Residues 302 to 343 (PHSSHNEDHQSDQDNHGQFMNDEHQSTDDDQNKSDNEKESES) show a composition bias toward basic and acidic residues. Polar residues predominate over residues 344–354 (ARNSGDLQQKV). Residues 376–386 (EGEEEDDDDEE) show a composition bias toward acidic residues. LRR repeat units lie at residues 400–421 (KSTKLSLSNCWLKVIPTDVWSI), 423–444 (ELRDLDLSANQLKKVSKSIGLL), 446–468 (HLKRLRLNHNQLTALPKELYSLP), 469–490 (RLTTLYLNNNNFKVVPKEINRL), 492–513 (SLKTLDLSFNQITDISPQTNLH), 517–538 (NLVELRLRYNQLSSLPQNMLES), and 540–561 (HLQVLWLEGNRLPLNKAILKKS). Disordered regions lie at residues 690–717 (WDQQQQQQQQQSPNVSTPPISTSPVLTG), 733–764 (PTQQINNPPSPVTQFNQASPQHNNNQQQQQQQ), and 796–825 (QQQQQQNGSPQQPHVNNNNNNNIQQNKDHQ). 2 stretches are compositionally biased toward polar residues: residues 701 to 717 (SPNVSTPPISTSPVLTG) and 733 to 757 (PTQQINNPPSPVTQFNQASPQHNNN). The 254-residue stretch at 851–1104 (IAIGARIGRG…EILPIMEGMI (254 aa)) folds into the Protein kinase domain. ATP contacts are provided by residues 857 to 865 (IGRGGYGQV) and Lys878. The active-site Proton acceptor is Asp974. Disordered stretches follow at residues 1118 to 1141 (GRPIPYVGPPEKDPSNKQPPQNMA) and 1245 to 1288 (QQQL…NDKK). Residues 1257–1268 (NRLNYNFNNSNN) show a composition bias toward low complexity. Residues 1269-1282 (SDIQPMQQENNYRM) are compositionally biased toward polar residues.

Belongs to the protein kinase superfamily. TKL Ser/Thr protein kinase family.

It carries out the reaction L-seryl-[protein] + ATP = O-phospho-L-seryl-[protein] + ADP + H(+). The enzyme catalyses L-threonyl-[protein] + ATP = O-phospho-L-threonyl-[protein] + ADP + H(+). This is Probable serine/threonine-protein kinase drkD (drkD) from Dictyostelium discoideum (Social amoeba).